Consider the following 213-residue polypeptide: Probable elongation factor 1-beta/1-delta 1 (213 aa).

It belongs to the EF-1-beta/EF-1-delta family. As to quaternary structure, EF-1 is composed of 4 subunits: alpha, beta, delta, and gamma.

Its function is as follows. EF-1-beta and EF-1-delta stimulate the exchange of GDP bound to EF-1-alpha to GTP. The sequence is that of Probable elongation factor 1-beta/1-delta 1 (eef-1B.1) from Caenorhabditis elegans.